The primary structure comprises 199 residues: Protein P1 (199 aa).

The chain is Protein P1 from Rice tungro bacilliform virus (isolate Philippines) (RTBV).